The following is a 445-amino-acid chain: FAS-associated factor 2 (445 aa).

Ala2 carries the post-translational modification N-acetylalanine. A UBA domain is found at 12–48 (EQTEKLLQFQDLTGIESMEQCRLALEQHNWNMEAAVQ). N6-acetyllysine is present on Lys167. Residues 275 to 350 (SERLEREERN…EEKERKLECL (76 aa)) adopt a coiled-coil conformation. The interval 300–361 (SLRADQEKER…PEPSPDDPES (62 aa)) is disordered. Residues 303–348 (ADQEKERKKREEKERKRRKEEEVQQQKLAEERRRQNLQEEKERKLE) show a composition bias toward basic and acidic residues. A UBX domain is found at 357–439 (DDPESVKIIF…GLSHTEVLFV (83 aa)).

In terms of assembly, identified in a complex that contains SEL1L, OS9, FAF2/UBXD8, UBE2J1/UBC6E and AUP1. Interacts with YOD1. Interacts (via N-terminus) with UBQLN2 (via C-terminus). Interacts with PNPLA2. Interacts with ZFAND2B; probably through VCP. Interacts with LMBR1L and UBAC2.

The protein localises to the cytoplasm. It localises to the lipid droplet. The protein resides in the endoplasmic reticulum. Functionally, plays an important role in endoplasmic reticulum-associated degradation (ERAD) that mediates ubiquitin-dependent degradation of misfolded endoplasmic reticulum proteins. By controlling the steady-state expression of the IGF1R receptor, indirectly regulates the insulin-like growth factor receptor signaling pathway. Involved in inhibition of lipid droplet degradation by binding to phospholipase PNPL2 and inhibiting its activity by promoting dissociation of PNPL2 from its endogenous activator, ABHD5 which inhibits the rate of triacylglycerol hydrolysis. Involved in stress granule disassembly: associates with ubiquitinated G3BP1 in response to heat shock, thereby promoting interaction between ubiquitinated G3BP1 and VCP, followed by G3BP1 extraction from stress granules and stress granule disassembly. This Mus musculus (Mouse) protein is FAS-associated factor 2 (Faf2).